A 545-amino-acid polypeptide reads, in one-letter code: Methionine--tRNA ligase (545 aa).

A 'HIGH' region motif is present at residues 12–22 (PYANGSLHIGH). The Zn(2+) site is built by Cys-143, Cys-146, Cys-156, and Cys-159. The 'KMSKS' region signature appears at 329–333 (KLSKS). Residue Lys-332 coordinates ATP.

Belongs to the class-I aminoacyl-tRNA synthetase family. MetG type 1 subfamily. As to quaternary structure, monomer. The cofactor is Zn(2+).

Its subcellular location is the cytoplasm. The enzyme catalyses tRNA(Met) + L-methionine + ATP = L-methionyl-tRNA(Met) + AMP + diphosphate. Functionally, is required not only for elongation of protein synthesis but also for the initiation of all mRNA translation through initiator tRNA(fMet) aminoacylation. This is Methionine--tRNA ligase (metG) from Buchnera aphidicola subsp. Baizongia pistaciae (strain Bp).